Here is a 63-residue protein sequence, read N- to C-terminus: DNA-directed RNA polymerase 7 kDa subunit (63 aa).

It belongs to the poxviridae DNA-directed RNA polymerase 7 kDa subunit family. The DNA-dependent RNA polymerase used for intermediate and late genes expression consists of eight subunits 147 kDa, 133 kDa, 35 kDa, 30 kDa, 22 kDa, 19 kDa, 18 kDa and 7 kDa totalling more than 500 kDa in mass. The same holoenzyme, with the addition of the transcription-specificity factor RAP94, is used for early gene expression.

It localises to the virion. The enzyme catalyses RNA(n) + a ribonucleoside 5'-triphosphate = RNA(n+1) + diphosphate. In terms of biological role, part of the DNA-dependent RNA polymerase which catalyzes the transcription of viral DNA into RNA using the four ribonucleoside triphosphates as substrates. Responsible for the transcription of early, intermediate and late genes. DNA-dependent RNA polymerase associates with the early transcription factor (ETF) thereby allowing the early genes transcription. Late transcription, and probably also intermediate transcription, require newly synthesized RNA polymerase. This Homo sapiens (Human) protein is DNA-directed RNA polymerase 7 kDa subunit (RPO7).